The following is a 549-amino-acid chain: Hydroxylamine reductase (549 aa).

4 residues coordinate [4Fe-4S] cluster: Cys5, Cys8, Cys17, and Cys23. Residues His243, Glu267, Cys311, Cys403, Cys431, Cys456, Glu491, and Lys493 each coordinate hybrid [4Fe-2O-2S] cluster. Position 403 is a cysteine persulfide (Cys403).

Belongs to the HCP family. It depends on [4Fe-4S] cluster as a cofactor. Hybrid [4Fe-2O-2S] cluster serves as cofactor.

The protein localises to the cytoplasm. It catalyses the reaction A + NH4(+) + H2O = hydroxylamine + AH2 + H(+). Its function is as follows. Catalyzes the reduction of hydroxylamine to form NH(3) and H(2)O. This is Hydroxylamine reductase from Desulfitobacterium hafniense (strain Y51).